The following is a 225-amino-acid chain: Glutathione S-transferase Mu 3 (225 aa).

A GST N-terminal domain is found at 5 to 92 (SSMVLGYWDI…YIARKHNMCG (88 aa)). Residues 11–12 (YW), 50–54 (WLDVK), and 63–64 (NL) each bind glutathione. K54 participates in a covalent cross-link: Glycyl lysine isopeptide (Lys-Gly) (interchain with G-Cter in SUMO2). K73 participates in a covalent cross-link: Glycyl lysine isopeptide (Lys-Gly) (interchain with G-Cter in SUMO2). Residue 76–77 (QS) participates in glutathione binding. Residues 94–212 (TEEEKIRVDI…QSDQFFKMPI (119 aa)) form the GST C-terminal domain. Residue Y120 participates in substrate binding.

Belongs to the GST superfamily. Mu family. Homodimer.

It is found in the cytoplasm. The enzyme catalyses RX + glutathione = an S-substituted glutathione + a halide anion + H(+). Functionally, conjugation of reduced glutathione to a wide number of exogenous and endogenous hydrophobic electrophiles. May govern uptake and detoxification of both endogenous compounds and xenobiotics at the testis and brain blood barriers. The sequence is that of Glutathione S-transferase Mu 3 (GSTM3) from Macaca fuscata fuscata (Japanese macaque).